The primary structure comprises 141 residues: Putative pre-16S rRNA nuclease (141 aa).

This sequence belongs to the YqgF nuclease family.

The protein resides in the cytoplasm. In terms of biological role, could be a nuclease involved in processing of the 5'-end of pre-16S rRNA. The sequence is that of Putative pre-16S rRNA nuclease from Shewanella oneidensis (strain ATCC 700550 / JCM 31522 / CIP 106686 / LMG 19005 / NCIMB 14063 / MR-1).